A 638-amino-acid polypeptide reads, in one-letter code: 1,4-alpha-glucan branching enzyme GlgB (638 aa).

The active-site Nucleophile is the Asp303. Glu356 (proton donor) is an active-site residue.

The protein belongs to the glycosyl hydrolase 13 family. GlgB subfamily. As to quaternary structure, monomer.

The enzyme catalyses Transfers a segment of a (1-&gt;4)-alpha-D-glucan chain to a primary hydroxy group in a similar glucan chain.. It functions in the pathway glycan biosynthesis; glycogen biosynthesis. Catalyzes the formation of the alpha-1,6-glucosidic linkages in glycogen by scission of a 1,4-alpha-linked oligosaccharide from growing alpha-1,4-glucan chains and the subsequent attachment of the oligosaccharide to the alpha-1,6 position. In Lactobacillus acidophilus (strain ATCC 700396 / NCK56 / N2 / NCFM), this protein is 1,4-alpha-glucan branching enzyme GlgB.